The following is a 348-amino-acid chain: CCN family member 2 (348 aa).

The N-terminal stretch at 1 to 25 (MLASVAGPISLALVLLALCTRPAMG) is a signal peptide. The region spanning 26 to 97 (QDCSAQCQCA…NRKIGVCTAK (72 aa)) is the IGFBP N-terminal domain. Disulfide bonds link cysteine 28-cysteine 53, cysteine 32-cysteine 55, cysteine 34-cysteine 56, cysteine 42-cysteine 59, cysteine 67-cysteine 81, and cysteine 73-cysteine 94. The region spanning 100 to 166 (APCVFGGSVY…GKCCEEWVCD (67 aa)) is the VWFC domain. A TSP type-1 domain is found at 197–242 (NCLVQTTEWSACSKTCGMGISTRVTNDNTFCRLEKQSRLCMVRPCE). The segment at 246 to 348 (EENIKKGKKC…YYRKMYGDMA (103 aa)) is heparin-binding. Intrachain disulfides connect cysteine 255-cysteine 292, cysteine 272-cysteine 306, cysteine 283-cysteine 322, cysteine 286-cysteine 324, and cysteine 291-cysteine 328. The region spanning 255-329 (CIRTPKIAKP…KTCACHYNCP (75 aa)) is the CTCK domain.

The protein belongs to the CCN family. Monomer. Interacts with TSKU. Testis, spleen, kidney, lung, heart, and brain (lowest level in testis and highest in lung).

Its subcellular location is the secreted. It is found in the extracellular space. The protein localises to the extracellular matrix. Major connective tissue mitoattractant secreted by vascular endothelial cells. Promotes proliferation and differentiation of chondrocytes. Is involved in the stimulation of osteoblast differentiation and has a critical role in osteogenesis. Mediates heparin- and divalent cation-dependent cell adhesion in many cell types including fibroblasts, myofibroblasts, endothelial and epithelial cells. Enhances fibroblast growth factor-induced DNA synthesis. The sequence is that of CCN family member 2 from Mus musculus (Mouse).